A 356-amino-acid chain; its full sequence is Proline-rich protein 19 (356 aa).

Positions 1 to 12 are enriched in polar residues; it reads MDTQGPVSQPFQ. Disordered stretches follow at residues 1–53, 95–143, 216–255, and 312–331; these read MDTQ…RDPP, LVPG…ELSG, INSP…RGSL, and PSSP…SPPS. A compositionally biased stretch (basic residues) spans 19–29; the sequence is RVRRRKTRRER.

Interacts with CNTD1.

It is found in the nucleus. It localises to the chromosome. Promotes meiotic crossing over formation through its interaction with CNTD1 by participating in the crossover differentiation step of crossover-specific recombination intermediates. This chain is Proline-rich protein 19, found in Homo sapiens (Human).